The primary structure comprises 1875 residues: Nonribosomal peptide synthetase otaB (1875 aa).

The interval 202–590 is adenylation 1; the sequence is GQVRENGDRA…SIRFAGRRQA (389 aa). One can recognise a Carrier domain in the interval 724–800; that stretch reads SPMTAAERVM…DLVAHIKDAG (77 aa). Position 761 is an O-(pantetheine 4'-phosphoryl)serine (Ser-761). The tract at residues 836–1245 is condensation; that stretch reads EDVYPCTTLQ…LVSPLDEERL (410 aa). An adenylation 2 region spans residues 1264 to 1659; sequence QKQSYAQPQA…ARKDTQVKIR (396 aa).

Belongs to the NRP synthetase family.

The catalysed reaction is 7-carboxymellein + L-phenylalanine + ATP = ochratoxin B + ADP + phosphate + H(+). It functions in the pathway mycotoxin biosynthesis. Functionally, nonribosomal peptide synthetase; part of the gene cluster that mediates the biosynthesis of ochratoxin A (OTA), a mycotoxin composed of a chlorinated type I polyketide dihydroisocoumarin moiety linked to L-phenylalanine, and demonstrated to have nephrotoxic, immunotoxic, genotoxic, neurotoxic, and teratogenic properties. OtaB is responsible for the linking of phenylalanine to the dihydroisocoumarin ring. The pathway begins with the highly reducing polyketide synthase otaA that catalyzes the formation of the isocoumarin group during the initial stages of biosynthesis, starting from one acetate and 4 malonate units, to originate the characteristic pentaketide skeleton 7-methylmellein (7-MM) of the OTA molecule. The newly identified cyclase otaY might be involved in the polyketide cyclization reaction during the initial steps of the OTA biosynthesis. 7-MM is then oxidized into 7-carboxymellein (also called ochratoxin beta) by the cytochrome P450 monooxygenase otaC. The NRPS encoded by the otaB gene is involved in the linking of phenylalanine to the dihydroisocoumarin ring. The reaction catalyzed by NRPS results in the production of ochratoxin B (OTB), which is the non-chlorinated analog of OTA and which subsequently serves as the substrate of the halogenase otaD for chlorination activity to form the final molecular structure of OTA, containing a chlorine atom in the C-5 position of the molecule. The polypeptide is Nonribosomal peptide synthetase otaB (Aspergillus carbonarius (strain ITEM 5010)).